Consider the following 273-residue polypeptide: Dermonecrotic toxin LhSicTox-alphaIA1iv (273 aa).

Residue histidine 5 is part of the active site. Positions 25 and 27 each coordinate Mg(2+). Histidine 41 (nucleophile) is an active-site residue. Disulfide bonds link cysteine 45-cysteine 51 and cysteine 47-cysteine 190. Aspartate 85 lines the Mg(2+) pocket.

It belongs to the arthropod phospholipase D family. Class II subfamily. Mg(2+) serves as cofactor. In terms of tissue distribution, expressed by the venom gland.

It localises to the secreted. The enzyme catalyses an N-(acyl)-sphingosylphosphocholine = an N-(acyl)-sphingosyl-1,3-cyclic phosphate + choline. The catalysed reaction is an N-(acyl)-sphingosylphosphoethanolamine = an N-(acyl)-sphingosyl-1,3-cyclic phosphate + ethanolamine. It catalyses the reaction a 1-acyl-sn-glycero-3-phosphocholine = a 1-acyl-sn-glycero-2,3-cyclic phosphate + choline. It carries out the reaction a 1-acyl-sn-glycero-3-phosphoethanolamine = a 1-acyl-sn-glycero-2,3-cyclic phosphate + ethanolamine. In terms of biological role, dermonecrotic toxins cleave the phosphodiester linkage between the phosphate and headgroup of certain phospholipids (sphingolipid and lysolipid substrates), forming an alcohol (often choline) and a cyclic phosphate. This toxin acts on sphingomyelin (SM). It may also act on ceramide phosphoethanolamine (CPE), lysophosphatidylcholine (LPC) and lysophosphatidylethanolamine (LPE), but not on lysophosphatidylserine (LPS), and lysophosphatidylglycerol (LPG). It acts by transphosphatidylation, releasing exclusively cyclic phosphate products as second products. Induces dermonecrosis, hemolysis, increased vascular permeability, edema, inflammatory response, and platelet aggregation. The sequence is that of Dermonecrotic toxin LhSicTox-alphaIA1iv from Loxosceles hirsuta (Recluse spider).